An 85-amino-acid polypeptide reads, in one-letter code: Small ribosomal subunit protein bS18c (85 aa).

Belongs to the bacterial ribosomal protein bS18 family. Part of the 30S ribosomal subunit.

It is found in the plastid. Its subcellular location is the chloroplast. This is Small ribosomal subunit protein bS18c from Tupiella akineta (Green alga).